The sequence spans 481 residues: ATP synthase subunit beta (481 aa).

167 to 174 provides a ligand contact to ATP; the sequence is GGAGVGKT.

The protein belongs to the ATPase alpha/beta chains family. In terms of assembly, F-type ATPases have 2 components, CF(1) - the catalytic core - and CF(0) - the membrane proton channel. CF(1) has five subunits: alpha(3), beta(3), gamma(1), delta(1), epsilon(1). CF(0) has three main subunits: a(1), b(2) and c(9-12). The alpha and beta chains form an alternating ring which encloses part of the gamma chain. CF(1) is attached to CF(0) by a central stalk formed by the gamma and epsilon chains, while a peripheral stalk is formed by the delta and b chains.

The protein resides in the cell membrane. The catalysed reaction is ATP + H2O + 4 H(+)(in) = ADP + phosphate + 5 H(+)(out). Its function is as follows. Produces ATP from ADP in the presence of a proton gradient across the membrane. The catalytic sites are hosted primarily by the beta subunits. The polypeptide is ATP synthase subunit beta (Corynebacterium jeikeium (strain K411)).